Consider the following 296-residue polypeptide: uncharacterized protein (296 aa).

The helical transmembrane segment at 7-26 (CFSLVCALGASTYLLWRGWL) threads the bilayer.

It localises to the membrane. This is an uncharacterized protein from Treponema pallidum (strain Nichols).